Reading from the N-terminus, the 200-residue chain is ATP-dependent Clp protease proteolytic subunit 1 (200 aa).

The Nucleophile role is filled by serine 98. The active site involves histidine 123.

Belongs to the peptidase S14 family. Fourteen ClpP subunits assemble into 2 heptameric rings which stack back to back to give a disk-like structure with a central cavity, resembling the structure of eukaryotic proteasomes.

Its subcellular location is the cytoplasm. It catalyses the reaction Hydrolysis of proteins to small peptides in the presence of ATP and magnesium. alpha-casein is the usual test substrate. In the absence of ATP, only oligopeptides shorter than five residues are hydrolyzed (such as succinyl-Leu-Tyr-|-NHMec, and Leu-Tyr-Leu-|-Tyr-Trp, in which cleavage of the -Tyr-|-Leu- and -Tyr-|-Trp bonds also occurs).. In terms of biological role, cleaves peptides in various proteins in a process that requires ATP hydrolysis. Has a chymotrypsin-like activity. Plays a major role in the degradation of misfolded proteins. The protein is ATP-dependent Clp protease proteolytic subunit 1 of Mycobacterium bovis (strain ATCC BAA-935 / AF2122/97).